A 210-amino-acid polypeptide reads, in one-letter code: Oxygen-insensitive NADPH nitroreductase (210 aa).

Residue 150–155 coordinates NADP(+); sequence GVSLMG.

The protein belongs to the nitroreductase family.

Functionally, reduction of a variety of nitroaromatic compounds using NADPH as source of reducing equivalents; two electrons are transferred. Capable of reducing metronidazole; inactive RdxA renders the bacterium resistant to this compound. The reduction of metronidazole generates hydroxylamine, a potent mutagen and bactericide. The chain is Oxygen-insensitive NADPH nitroreductase (rdxA) from Helicobacter pylori (strain ATCC 700392 / 26695) (Campylobacter pylori).